A 206-amino-acid chain; its full sequence is Heterochromatin protein 1 (206 aa).

Disordered stretches follow at residues 1 to 24 (MGKK…EEEY) and 47 to 145 (GYPE…GFDR). Residues Ser-11 and Ser-15 each carry the phosphoserine modification. Residues 24–82 (YAVEKIIDRRVRKGKVEYYLKWKGYPETENTWEPENNLDCQDLIQQYEASRKDEEKSAA) enclose the Chromo 1 domain. A compositionally biased stretch (low complexity) spans 50-60 (ETENTWEPENN). A compositionally biased stretch (basic and acidic residues) spans 72-98 (ASRKDEEKSAASKKDRPSSSAKAKETQ). A binds to Su(var)39 region spans residues 95-206 (KETQGRASSS…RLSWYSDNED (112 aa)). Ser-102, Ser-103, and Ser-113 each carry phosphoserine. Phosphothreonine occurs at positions 127, 128, and 134. One can recognise a Chromo 2 domain in the interval 147 to 205 (LEAEKILGASDNNGRLTFLIQFKGVDQAEMVPSSVANEKIPRMVIHFYEERLSWYSDNE).

As to quaternary structure, homodimer. Probably associates with Su(var)3-9. Interacts with Mcm10. Interacts (via chromoshadow domain) with piwi (via N-terminal region). Interacts with Rrp6. Associates with and may be part of the HipHop-HOAP telomere capping complex but is not required for its stability or telomere localization. Interacts (via the chromo domain 2 (chromoshadow domain) and the hinge region between chromo domains 1 and 2) with cav/HOAP (via C-terminus); the interaction is direct. Each molecule of cav/HOAP interacts with 2 molecules of Su(var)205/HP1. Interacts with HipHop (via N-terminus). Interacts with moi/modigliani; the interaction is direct. Interacts (via chromo domain 1) with His3/histone 3 (via N-terminal tail methylated at 'Lys-10'); the interaction is direct. In terms of tissue distribution, salivary gland (at protein level).

The protein localises to the nucleus. Its subcellular location is the nucleoplasm. It is found in the chromosome. The protein resides in the telomere. Structural component of heterochromatin, involved in gene repression and the modification of position-effect-variegation. Recognizes and binds histone H3 tails methylated at 'Lys-9', leading to epigenetic repression. Stabilizes chromatin-associated RNAs probably by binding to them and thereby preventing their degradation. Associates with, and may be a part of, the HipHop-HOAP complex that recruits the MTV complex to form the terminin telomere-capping complex, which binds to chromosome ends in a sequence-independent manner and prevents telomere fusion. Telomere capping is independent of the origin recognition complex (ORC). In Drosophila melanogaster (Fruit fly), this protein is Heterochromatin protein 1.